Here is a 407-residue protein sequence, read N- to C-terminus: Pleckstrin homology-like domain family A member 1 (407 aa).

Composition is skewed to basic and acidic residues over residues 1–11 (MRRTPAAERLS) and 54–63 (RSAEDGREQP). A disordered region spans residues 1–67 (MRRTPAAERL…DGREQPAHGS (67 aa)). Positions 149–184 (SGCKALKEGVLEKRSDGLLQLWKKKCCILTEEGLLL) constitute a PH domain. 2 disordered regions span residues 188-224 (KQVQHQQQQQQQQQPGQGTAEPSQPSGPAVTSLEPPA) and 296-407 (QQHL…SNSA). Composition is skewed to low complexity over residues 189–204 (QVQHQQQQQQQQQPGQ) and 297–319 (QHLVQQQPPQTQQIQPQPQQPQI). A 15 X 2 AA repeats of P-Q region spans residues 312–348 (PQPQQPQIQPQPQPQIQPQPQPQPQPQPQPQQQPQPQ). Pro residues predominate over residues 320–344 (QPQPQPQIQPQPQPQPQPQPQPQQQ). The 11 X 2 AA repeats of P-H stretch occupies residues 354-381 (PHPHPHLYPHPHPHAHSHPHPHPHPHPH). Positions 354-384 (PHPHPHLYPHPHPHAHSHPHPHPHPHPHQLQ) are enriched in basic residues. Positions 385-395 (HAHQPLHSQPQ) are enriched in low complexity.

In terms of assembly, interacts with RPL14, EIF3S7 and PABPC4.

Its subcellular location is the cytoplasm. The protein localises to the cytoplasmic vesicle. The protein resides in the nucleus. It localises to the nucleolus. In terms of biological role, seems to be involved in regulation of apoptosis. May be involved in detachment-mediated programmed cell death. May mediate apoptosis during neuronal development. May be involved in regulation of anti-apoptotic effects of IGF1. May be involved in translational regulation. The polypeptide is Pleckstrin homology-like domain family A member 1 (Phlda1) (Rattus norvegicus (Rat)).